A 214-amino-acid chain; its full sequence is NADH-quinone oxidoreductase subunit C (214 aa).

This sequence belongs to the complex I 30 kDa subunit family. As to quaternary structure, NDH-1 is composed of 14 different subunits. Subunits NuoB, C, D, E, F, and G constitute the peripheral sector of the complex.

The protein resides in the cell inner membrane. The enzyme catalyses a quinone + NADH + 5 H(+)(in) = a quinol + NAD(+) + 4 H(+)(out). Its function is as follows. NDH-1 shuttles electrons from NADH, via FMN and iron-sulfur (Fe-S) centers, to quinones in the respiratory chain. The immediate electron acceptor for the enzyme in this species is believed to be ubiquinone. Couples the redox reaction to proton translocation (for every two electrons transferred, four hydrogen ions are translocated across the cytoplasmic membrane), and thus conserves the redox energy in a proton gradient. The chain is NADH-quinone oxidoreductase subunit C from Francisella tularensis subsp. mediasiatica (strain FSC147).